A 376-amino-acid chain; its full sequence is Hydroxylysine kinase (376 aa).

Catalysis depends on aspartate 229, which acts as the Proton acceptor.

Belongs to the aminoglycoside phosphotransferase family.

It localises to the cytoplasm. It catalyses the reaction (5R)-5-hydroxy-L-lysine + GTP = (5R)-5-phosphooxy-L-lysine + GDP + H(+). Its function is as follows. Catalyzes the GTP-dependent phosphorylation of 5-hydroxy-L-lysine. The polypeptide is Hydroxylysine kinase (Hykk) (Mus musculus (Mouse)).